The chain runs to 812 residues: MDHKEVILLFLLLLKPGQGDSLDGYISTQGASLFSLTKKQLAAGGVSDCLAKCEGETDFVCRSFQYHSKEQQCVIMAENSKTSSIIRMRDVILFEKRVYLSECKTGIGNGYRGTMSRTKSGVACQKWGATFPHVPNYSPSTHPNEGLEENYCRNPDNDEQGPWCYTTDPDKRYDYCNIPECEEECMYCSGEKYEGKISKTMSGLDCQAWDSQSPHAHGYIPAKFPSKNLKMNYCRNPDGEPRPWCFTTDPTKRWEYCDIPRCTTPPPPPSPTYQCLKGRGENYRGTVSVTVSGKTCQRWSEQTPHRHNRTPENFPCKNLEENYCRNPDGETAPWCYTTDSQLRWEYCEIPSCESSASPDQSDSSVPPEEQTPVVQECYQSDGQSYRGTSSTTITGKKCQSWAAMFPHRHSKTPENFPDAGLEMNYCRNPDGDKGPWCYTTDPSVRWEYCNLKRCSETGGSVVELPTVSQEPSGPSDSETDCMYGNGKDYRGKTAVTAAGTPCQGWAAQEPHRHSIFTPQTNPRAGLEKNYCRNPDGDVNGPWCYTTNPRKLYDYCDIPLCASASSFECGKPQVEPKKCPGRVVGGCVANPHSWPWQISLRTRFTGQHFCGGTLIAPEWVLTAAHCLEKSSRPEFYKVILGAHEEYIRGLDVQEISVAKLILEPNNRDIALLKLSRPATITDKVIPACLPSPNYMVADRTICYITGWGETQGTFGAGRLKEAQLPVIENKVCNRVEYLNNRVKSTELCAGQLAGGVDSCQGDSGGPLVCFEKDKYILQGVTSWGLGCARPNKPGVYVRVSRFVDWIEREMRNN.

The N-terminal stretch at 1 to 19 is a signal peptide; the sequence is MDHKEVILLFLLLLKPGQG. Residues 20–98 form the PAN domain; the sequence is DSLDGYISTQ…RDVILFEKRV (79 aa). Disulfide bonds link Cys-49/Cys-73, Cys-53/Cys-61, Cys-103/Cys-181, Cys-124/Cys-164, Cys-152/Cys-176, Cys-185/Cys-262, Cys-188/Cys-316, Cys-206/Cys-245, Cys-234/Cys-257, Cys-275/Cys-352, Cys-296/Cys-335, Cys-324/Cys-347, Cys-377/Cys-454, Cys-398/Cys-437, Cys-426/Cys-449, Cys-481/Cys-560, Cys-502/Cys-543, Cys-531/Cys-555, Cys-568/Cys-687, Cys-578/Cys-586, and Cys-609/Cys-625. 5 Kringle domains span residues 103–181, 184–262, 275–352, 377–454, and 481–560; these read CKTG…IPEC, ECMY…IPRC, CLKG…IPSC, CYQS…LKRC, and CMYG…IPLC. One can recognise a Peptidase S1 domain in the interval 582–810; that stretch reads VVGGCVANPH…FVDWIEREMR (229 aa). Position 598 is a phosphoserine (Ser-598). Catalysis depends on charge relay system residues His-624 and Asp-667. Ser-690 carries the post-translational modification Phosphoserine. Intrachain disulfides connect Cys-701-Cys-768, Cys-731-Cys-747, and Cys-758-Cys-786. The active-site Charge relay system is Ser-762.

Belongs to the peptidase S1 family. Plasminogen subfamily. In terms of assembly, interacts (both mature PLG and the angiostatin peptide) with AMOT and CSPG4. Interacts (via the Kringle domains) with HRG; the interaction tethers PLG to the cell surface and enhances its activation. Interacts (via Kringle 4 domain) with ADA; the interaction stimulates PLG activation when in complex with DPP4. Angiostatin: Interacts with ATP5F1A; the interaction inhibits most of the angiogenic effects of angiostatin. In terms of processing, in the presence of the inhibitor, the activation involves only cleavage after Arg-581, yielding two chains held together by two disulfide bonds. In the absence of the inhibitor, the activation involves additionally the removal of the activation peptide.

The protein localises to the secreted. It catalyses the reaction Preferential cleavage: Lys-|-Xaa &gt; Arg-|-Xaa, higher selectivity than trypsin. Converts fibrin into soluble products.. Converted into plasmin by plasminogen activators, both plasminogen and its activator being bound to fibrin. Cannot be activated with streptokinase. Plasmin dissolves the fibrin of blood clots and acts as a proteolytic factor in a variety of other processes including embryonic development, tissue remodeling, tumor invasion, and inflammation. In ovulation, weakens the walls of the Graafian follicle. It activates the urokinase-type plasminogen activator, collagenases and several complement zymogens, such as C1, C4 and C5. Cleavage of fibronectin and laminin leads to cell detachment and apoptosis. Also cleaves fibrin, thrombospondin and von Willebrand factor. Its role in tissue remodeling and tumor invasion may be modulated by CSPG4. Binds to cells. In terms of biological role, angiostatin is an angiogenesis inhibitor that blocks neovascularization and growth of experimental primary and metastatic tumors in vivo. In Mus musculus (Mouse), this protein is Plasminogen (Plg).